A 211-amino-acid chain; its full sequence is Cytochrome c biogenesis ATP-binding export protein CcmA (211 aa).

The 206-residue stretch at 6–211 (LQTVALACER…RDIDLGNWAV (206 aa)) folds into the ABC transporter domain. 38–45 (GPNGSGKT) provides a ligand contact to ATP.

It belongs to the ABC transporter superfamily. CcmA exporter (TC 3.A.1.107) family. The complex is composed of two ATP-binding proteins (CcmA) and two transmembrane proteins (CcmB).

The protein resides in the cell inner membrane. It catalyses the reaction heme b(in) + ATP + H2O = heme b(out) + ADP + phosphate + H(+). Its function is as follows. Part of the ABC transporter complex CcmAB involved in the biogenesis of c-type cytochromes; once thought to export heme, this seems not to be the case, but its exact role is uncertain. Responsible for energy coupling to the transport system. In Pseudomonas fluorescens (strain Pf0-1), this protein is Cytochrome c biogenesis ATP-binding export protein CcmA.